A 176-amino-acid chain; its full sequence is Lipoprotein signal peptidase (176 aa).

Helical transmembrane passes span 10 to 30, 48 to 68, 78 to 98, and 102 to 122; these read LFQF…AIVL, VPVL…AFSF, YFFT…LLRM, and MVVL…NLID. Active-site residues include Asp-131 and Asp-149. A helical transmembrane segment spans residues 141 to 161; sequence HFPAFNIADSAITLGTILLLI.

It belongs to the peptidase A8 family.

It localises to the cell inner membrane. It catalyses the reaction Release of signal peptides from bacterial membrane prolipoproteins. Hydrolyzes -Xaa-Yaa-Zaa-|-(S,diacylglyceryl)Cys-, in which Xaa is hydrophobic (preferably Leu), and Yaa (Ala or Ser) and Zaa (Gly or Ala) have small, neutral side chains.. It functions in the pathway protein modification; lipoprotein biosynthesis (signal peptide cleavage). Its function is as follows. This protein specifically catalyzes the removal of signal peptides from prolipoproteins. The protein is Lipoprotein signal peptidase of Acinetobacter baumannii (strain ATCC 17978 / DSM 105126 / CIP 53.77 / LMG 1025 / NCDC KC755 / 5377).